The following is a 1000-amino-acid chain: SEC23-interacting protein (1000 aa).

Residues Met-1–Glu-367 form an interaction with SEC23A region. A disordered region spans residues Phe-133 to Pro-252. The segment covering Ser-154–Tyr-167 has biased composition (low complexity). Over residues Pro-207–Pro-218 the composition is skewed to pro residues. Low complexity predominate over residues Ser-235 to Pro-246. Residues Lys-644 to Leu-707 enclose the SAM domain. A disordered region spans residues Ala-716–Lys-748. 2 positions are modified to phosphoserine: Ser-737 and Ser-926. The region spanning Leu-779–Arg-989 is the DDHD domain.

Belongs to the PA-PLA1 family. In terms of assembly, interacts with SEC23A. Ubiquitously expressed with stronger levels detected in heart, liver and skeletal muscle.

It localises to the cytoplasmic vesicle. It is found in the COPII-coated vesicle membrane. Its subcellular location is the endoplasmic reticulum. Plays a role in the organization of endoplasmic reticulum exit sites. Specifically binds to phosphatidylinositol 3-phosphate (PI(3)P), phosphatidylinositol 4-phosphate (PI(4)P) and phosphatidylinositol 5-phosphate (PI(5)P). The protein is SEC23-interacting protein (SEC23IP) of Homo sapiens (Human).